The chain runs to 239 residues: Large ribosomal subunit protein uL1 (239 aa).

This sequence belongs to the universal ribosomal protein uL1 family. Part of the 50S ribosomal subunit.

Its function is as follows. Binds directly to 23S rRNA. The L1 stalk is quite mobile in the ribosome, and is involved in E site tRNA release. Protein L1 is also a translational repressor protein, it controls the translation of the L11 operon by binding to its mRNA. The protein is Large ribosomal subunit protein uL1 of Rickettsia conorii (strain ATCC VR-613 / Malish 7).